The sequence spans 106 residues: Vacuolar ATPase assembly integral membrane protein VMA21 homolog (106 aa).

The segment at Met-1–Asp-26 is disordered. Residues Met-1–Ser-32 are Cytoplasmic-facing. A helical transmembrane segment spans residues Phe-33 to Leu-53. Topologically, residues Leu-54–Lys-69 are lumenal. A helical membrane pass occupies residues Val-70–Ile-90. Residues Tyr-91–Asp-106 are Cytoplasmic-facing.

This sequence belongs to the VMA21 family.

The protein resides in the endoplasmic reticulum membrane. Its subcellular location is the endoplasmic reticulum-Golgi intermediate compartment membrane. It localises to the cytoplasmic vesicle. It is found in the COPII-coated vesicle membrane. In terms of biological role, required for the assembly of the V0 complex of the vacuolar ATPase (V-ATPase) in the endoplasmic reticulum. This chain is Vacuolar ATPase assembly integral membrane protein VMA21 homolog, found in Drosophila ananassae (Fruit fly).